Reading from the N-terminus, the 601-residue chain is Nuclear receptor subfamily 2 group C member 1 (601 aa).

The interval Met-1 to Met-179 is required for interaction with KAT2B. Positions Phe-111–Cys-186 form a DNA-binding region, nuclear receptor. NR C4-type zinc fingers lie at residues Cys-114–Cys-134 and Cys-150–Cys-169. Residues Ser-198 and Ser-216 each carry the phosphoserine modification. At Thr-221 the chain carries Phosphothreonine. Thr-223 bears the Phosphothreonine; by MAPK1 mark. Lys-251 participates in a covalent cross-link: Glycyl lysine isopeptide (Lys-Gly) (interchain with G-Cter in SUMO); alternate. Lys-251 is covalently cross-linked (Glycyl lysine isopeptide (Lys-Gly) (interchain with G-Cter in SUMO2); alternate). The NR LBD domain occupies Gly-349–Glu-591. Ser-582 bears the Phosphoserine; by PKC mark. The tract at residues Pro-585–Leu-601 is required for interaction with NRIP1. Lys-589 participates in a covalent cross-link: Glycyl lysine isopeptide (Lys-Gly) (interchain with G-Cter in SUMO2).

Belongs to the nuclear hormone receptor family. NR2 subfamily. In terms of assembly, homodimer. Heterodimer; with NR2C2 which is required for chromatin remodeling and for binding to promoter regions such as globin DR1 repeats. Interacts with ESR1; the interaction prevents homodimerization of ESR1 and suppresses its transcriptional activity and cell growth. Interacts with NRIP1 (via its LXXLL motifs); the interaction provides corepressor activity. Interacts with HDAC3 (via the DNA-binding domain); the interaction recruits phosphorylated NR2C1 to PML bodies for sumoylation. Interacts with HDAC4 (via the DNA-binding domain). Interacts with PIAS1; the interaction is required for sumoylation of NR2C1. Interacts with UBE2I; the interaction is required for sumoylation of NR2C1. Interacts with KAT2B; the interaction acts as a corepressor of gene expression. Sumoylation requires both PIAS1 and UBE2I. Sumoylation appears to dissociate NR2C1 from the PML nuclear bodies. Enhances the interaction with NRIP1 but inhibits interaction with KAT2B. In proliferating cells, stimulation by all-trans retinoic acid, activation of MAPK1-mediated phosphorylation and recruitment to PML bodies with subsequent sumoylation, suppresses OCT4 expression. Post-translationally, phosphorylated on several serine and threonine residues. Phosphorylation on Thr-223, stimulated by all-trans retinoic acid (atRA) mediates PML location and sumoylation in proliferating cells which then modulates its association with effector molecules, KAT2B and NRIP1. Phosphorylation on Ser-582 by PKC is important for protein stability and function as activator of RARB.

The protein resides in the nucleus. The protein localises to the PML body. Functionally, orphan nuclear receptor. Binds the IR7 element in the promoter of its own gene in an autoregulatory negative feedback mechanism. Primarily repressor of a broad range of genes including ESR1 and RARB. Together with NR2C2, forms the core of the DRED (direct repeat erythroid-definitive) complex that represses embryonic and fetal globin transcription. Binds to hormone response elements (HREs) consisting of two 5'-AGGTCA-3' half site direct repeat consensus sequences. Also activator of OCT4 gene expression. Plays a fundamental role in early embryogenesis and regulates embryonic stem cell proliferation and differentiation. Mediator of retinoic acid-regulated preadipocyte proliferation. The sequence is that of Nuclear receptor subfamily 2 group C member 1 (NR2C1) from Pongo abelii (Sumatran orangutan).